We begin with the raw amino-acid sequence, 101 residues long: Phosphoprotein OPG062 (101 aa).

Residues V48–V76 are disordered. Phosphoserine occurs at positions 53 and 62. Positions S56–R68 are enriched in basic and acidic residues.

The protein belongs to the orthopoxvirus OPG062 family. Self-associates to form high molecular-weight forms. Interacts with protein OPG157. Interacts with host RICTOR and RPTOR; these interactions disrupt the mTORC1 and mTORC2 crosstalk. In terms of processing, phosphorylated on two serines. While these phosphorylations do not play a role in virion assembly; they are essential for the interaction with host RICTOR and RPTOR.

The protein localises to the virion. Plays an essential role in virion assembly and morphogenesis. Also plays a role in the inhibition of host immune response by dysregulating mTOR. Sequesters host RICTOR and RPTOR, thereby disrupting mTORC1 and mTORC2 crosstalk. In turn, blocks the host antiviral response in part through mTOR-dependent degradation of cGAS, the primary poxvirus sensor. This Variola virus (isolate Human/India/Ind3/1967) (VARV) protein is Phosphoprotein OPG062 (OPG062).